Reading from the N-terminus, the 211-residue chain is MDKETYVSEIKSGLKGLPEGEAMIEEIESHIEHHLFRSFQEGKSEEEAMQTLLQAFGTPTDIVSSFKKIQPVTFRAFLMFHLFCNSALFAVGIAITIMHVWLESPFVQAVWKGISVSVWLILAAYMIYWVLIGYQGVKEFGKRGEKLVLHTILISMVPNVIFMLVFLFNVIPAALFQSLLTPWFVGTCAFATLLFPLFGRMGCYIGRRQLV.

The next 4 helical transmembrane spans lie at 77-97 (FLMF…AITI), 113-133 (GISV…VLIG), 152-172 (ILIS…NVIP), and 179-199 (LLTP…PLFG).

It is found in the cell membrane. This is an uncharacterized protein from Bacillus subtilis (strain 168).